Reading from the N-terminus, the 292-residue chain is Arabinose operon regulatory protein (292 aa).

Alpha-L-arabinopyanose-binding residues include Pro-8, Thr-24, Arg-38, Tyr-82, and His-93. Residues 180-279 (REACQYISDH…GASPSEFRAG (100 aa)) form the HTH araC/xylS-type domain. 2 consecutive DNA-binding regions (H-T-H motif) follow at residues 198–219 (ASVA…RQQL) and 246–269 (IATV…KKCT).

Homodimer.

It is found in the cytoplasm. With respect to regulation, arabinose converts the repressor form of AraC to the activator form to regulate the araBAD promoter. In the absence of arabinose, AraC binds to the araO2 and araI1 half-sites in the promoter region of the araBAD operon, leading to the formation of a DNA loop that blocks access of RNA polymerase to the promoter. In the presence of arabinose and the cyclic AMP receptor protein (CRP), it binds to the adjacent half-sites araI1 and araI2, leading to the binding of RNA polymerase to the promoter region and transcription of the araBAD operon. AraI1 acts as a switch mechanism allowing both the repressor and the activator forms of AraC protein to regulate the araBAD promoter. Inhibited by D-fucose, which binds competitively to the same site on the protein. Functionally, transcription factor that regulates the expression of several genes involved in the transport and metabolism of L-arabinose. Functions both as a positive and a negative regulator. In the presence of arabinose, activates the expression of the araBAD, araE, araFGH and araJ promoters. In the absence of arabinose, negatively regulates the araBAD operon. Represses its own transcription. Acts by binding directly to DNA. In Escherichia coli (strain K12), this protein is Arabinose operon regulatory protein.